The following is a 245-amino-acid chain: Dof zinc finger protein DOF3.2 (245 aa).

Residues 15 to 26 (SCSTQDYQNQKK) show a composition bias toward polar residues. A disordered region spans residues 15–41 (SCSTQDYQNQKKPLSATRPAPPEQSLR). The segment at 40–94 (LRCPRCDSTNTKFCYYNNYSLSQPRYFCKSCRRYWTKGGILRNIPIGGAYRKHKR) adopts a Dof-type zinc-finger fold. Residues cysteine 42, cysteine 45, cysteine 67, and cysteine 70 each contribute to the Zn(2+) site. Residues 91 to 118 (KHKRSSSATKSLRTTPEPTMTHDGKSFP) form a disordered region. The span at 96 to 108 (SSATKSLRTTPEP) shows a compositional bias: polar residues.

In terms of assembly, interacts with TCP14. As to expression, the PEAR proteins (e.g. DOF2.4, DOF5.1, DOF3.2, DOF1.1, DOF5.6 and DOF5.3) form a short-range concentration gradient that peaks at protophloem sieve elements (PSE).

It is found in the nucleus. In terms of biological role, transcription factor that negatively affects seed germination and opposes TCP14 function in the regulation of a specific set of abscisic acid-related genes. The PEAR proteins (e.g. DOF2.4, DOF5.1, DOF3.2, DOF1.1, DOF5.6 and DOF5.3) activate gene expression that promotes radial growth of protophloem sieve elements. This Arabidopsis thaliana (Mouse-ear cress) protein is Dof zinc finger protein DOF3.2.